The sequence spans 499 residues: Probable cytosol aminopeptidase (499 aa).

2 residues coordinate Mn(2+): lysine 263 and aspartate 268. Residue lysine 275 is part of the active site. Mn(2+) is bound by residues aspartate 286, aspartate 345, and glutamate 347. Arginine 349 is a catalytic residue.

Belongs to the peptidase M17 family. Mn(2+) serves as cofactor.

Its subcellular location is the cytoplasm. The enzyme catalyses Release of an N-terminal amino acid, Xaa-|-Yaa-, in which Xaa is preferably Leu, but may be other amino acids including Pro although not Arg or Lys, and Yaa may be Pro. Amino acid amides and methyl esters are also readily hydrolyzed, but rates on arylamides are exceedingly low.. It carries out the reaction Release of an N-terminal amino acid, preferentially leucine, but not glutamic or aspartic acids.. Its function is as follows. Presumably involved in the processing and regular turnover of intracellular proteins. Catalyzes the removal of unsubstituted N-terminal amino acids from various peptides. In Bradyrhizobium sp. (strain BTAi1 / ATCC BAA-1182), this protein is Probable cytosol aminopeptidase.